We begin with the raw amino-acid sequence, 71 residues long: uncharacterized protein (71 aa).

Residues 1–16 (MLLLYTVMILTCIIYK) lie on the Cytoplasmic side of the membrane. A helical transmembrane segment spans residues 17–38 (LVPDNKYWPIHMFFFIMIYIVY). Residues 39 to 69 (MYEKLDIHEKSQFWNYTMARLSGHPVPTIIC) lie on the Extracellular side of the membrane. N-linked (GlcNAc...) asparagine; by host glycosylation occurs at Asn-53.

This sequence belongs to the asfivirus X69R family.

The protein resides in the host membrane. This is an uncharacterized protein from African swine fever virus (isolate Pig/Kenya/KEN-50/1950) (ASFV).